Consider the following 463-residue polypeptide: Cysteine--tRNA ligase (463 aa).

Cys29 serves as a coordination point for Zn(2+). Residues 31–41 (PTVYDFAHIGN) carry the 'HIGH' region motif. Zn(2+) contacts are provided by Cys227, His252, and Glu256. The 'KMSKS' region motif lies at 285 to 289 (KMSKS). Residue Lys288 coordinates ATP.

This sequence belongs to the class-I aminoacyl-tRNA synthetase family. As to quaternary structure, monomer. Zn(2+) is required as a cofactor.

Its subcellular location is the cytoplasm. The catalysed reaction is tRNA(Cys) + L-cysteine + ATP = L-cysteinyl-tRNA(Cys) + AMP + diphosphate. The protein is Cysteine--tRNA ligase of Rhodopseudomonas palustris (strain BisA53).